A 451-amino-acid chain; its full sequence is MDTNRKRSLDEHDTGEESPGKLQIVEINDEEDITFTDNPYYKLVKSRDNSINLVPLVGCVMIKINDIKGVTDKVNKLLPKTSSKTNSTSCINIPIDSIPLNFLDDGNKYFNVSEVSILQVSHGNDMMNIDKYVDGSFDYIAVLCLKNSGRSVIMLNHCNKQHVMQDNFCLIFRSFYGINILTQIIGESVYLLVKLSPSDLFKIRWSSVIDSNRFMGKKFYIRNLQEDACIEKMKNMEKDIYKNIEFIIINSVLLEDLKSRLDITRELNHTIDKMFNHNNNTLFSDIIKLSEEIIDKDFKNMEKMSDSVLADVKQISKTKNKLRERLLKAAISSKEVEEILSDIPVIEEGTIKQFSLNQRAVYDHYKKVIYKNNSSLDLGCMNIEKSYMFNLYKVYGQNEYMITYILNLINRVKKGMDAIKSNLGDIYKYNIDNINLVVSERINKVISGESL.

Residues 1–12 show a composition bias toward basic and acidic residues; the sequence is MDTNRKRSLDEH. Residues 1-20 are disordered; that stretch reads MDTNRKRSLDEHDTGEESPG.

The protein belongs to the poxviridae F11 protein family.

Functionally, stimulates increases in peripheral microtubule dynamics and may increase the motility of the infected cells, contributing to cell-to-cell spread of the virus. The polypeptide is Protein F11 homolog (Fowlpox virus (strain NVSL) (FPV)).